The sequence spans 236 residues: Purine nucleoside phosphorylase DeoD-type (236 aa).

Position 5 (His-5) interacts with a purine D-ribonucleoside. Residues Gly-21, Arg-25, Arg-44, and 88 to 91 (RVGT) contribute to the phosphate site. A purine D-ribonucleoside-binding positions include 180-182 (EME) and 204-205 (SD). Residue Asp-205 is the Proton donor of the active site.

It belongs to the PNP/UDP phosphorylase family. Homohexamer; trimer of homodimers.

The enzyme catalyses a purine D-ribonucleoside + phosphate = a purine nucleobase + alpha-D-ribose 1-phosphate. It carries out the reaction a purine 2'-deoxy-D-ribonucleoside + phosphate = a purine nucleobase + 2-deoxy-alpha-D-ribose 1-phosphate. Functionally, catalyzes the reversible phosphorolytic breakdown of the N-glycosidic bond in the beta-(deoxy)ribonucleoside molecules, with the formation of the corresponding free purine bases and pentose-1-phosphate. The sequence is that of Purine nucleoside phosphorylase DeoD-type from Shewanella amazonensis (strain ATCC BAA-1098 / SB2B).